Reading from the N-terminus, the 185-residue chain is Large ribosomal subunit protein uL5 (185 aa).

Belongs to the universal ribosomal protein uL5 family. As to quaternary structure, part of the 50S ribosomal subunit; part of the 5S rRNA/L5/L18/L25 subcomplex. Contacts the 5S rRNA and the P site tRNA. Forms a bridge to the 30S subunit in the 70S ribosome.

Its function is as follows. This is one of the proteins that bind and probably mediate the attachment of the 5S RNA into the large ribosomal subunit, where it forms part of the central protuberance. In the 70S ribosome it contacts protein S13 of the 30S subunit (bridge B1b), connecting the 2 subunits; this bridge is implicated in subunit movement. Contacts the P site tRNA; the 5S rRNA and some of its associated proteins might help stabilize positioning of ribosome-bound tRNAs. The sequence is that of Large ribosomal subunit protein uL5 from Afipia carboxidovorans (strain ATCC 49405 / DSM 1227 / KCTC 32145 / OM5) (Oligotropha carboxidovorans).